The following is a 133-amino-acid chain: Homeobox protein HD-5 (133 aa).

Residues 34–93 (SKRSRLKLSGQQIDVLESNFKIDSHPNSATKSLLSNALSIPLKNIQIWFQNRRAKEKTAR) constitute a DNA-binding region (homeobox). A disordered region spans residues 86–109 (RAKEKTARDGGRRRSGNAEIEDGE).

The protein localises to the nucleus. This is Homeobox protein HD-5 (HD-5) from Encephalitozoon cuniculi (strain GB-M1) (Microsporidian parasite).